The sequence spans 172 residues: Alpha-crystallin A chain (172 aa).

At M1 the chain carries N-acetylmethionine. Residues M1–E63 form a required for complex formation with BFSP1 and BFSP2 region. Q6 is modified (deamidated glutamine; partial). Residue S45 is modified to Phosphoserine. Residue Q50 is modified to Deamidated glutamine; partial. Residues L52–E163 form the sHSP domain. At K70 the chain carries N6-acetyllysine. Q90 carries the post-translational modification Deamidated glutamine; partial. The residue at position 99 (K99) is an N6-acetyllysine. Residue H100 participates in Zn(2+) binding. N101 carries the deamidated asparagine; partial modification. Residues E102 and H107 each coordinate Zn(2+). S122 is subject to Phosphoserine. N123 is subject to Deamidated asparagine; partial. At Q147 the chain carries Deamidated glutamine; partial. H154 contributes to the Zn(2+) binding site. S168 carries O-linked (GlcNAc) serine glycosylation.

Belongs to the small heat shock protein (HSP20) family. Heteromer composed of three CRYAA and one CRYAB subunits. Inter-subunit bridging via zinc ions enhances stability, which is crucial as there is no protein turn over in the lens. Can also form homodimers and homotetramers (dimers of dimers) which serve as the building blocks of homooligomers. Within homooligomers, the zinc-binding motif is created from residues of 3 different molecules. His-100 and Glu-102 from one molecule are ligands of the zinc ion, and His-107 and His-154 residues from additional molecules complete the site with tetrahedral coordination geometry. Part of a complex required for lens intermediate filament formation composed of BFSP1, BFSP2 and CRYAA. In terms of processing, acetylation at Lys-70 may increase chaperone activity. Undergoes age-dependent proteolytical cleavage at the C-terminus.

It localises to the cytoplasm. The protein localises to the nucleus. Its function is as follows. Contributes to the transparency and refractive index of the lens. Acts as a chaperone, preventing aggregation of various proteins under a wide range of stress conditions. Required for the correct formation of lens intermediate filaments as part of a complex composed of BFSP1, BFSP2 and CRYAA. This chain is Alpha-crystallin A chain (CRYAA), found in Macaca mulatta (Rhesus macaque).